Reading from the N-terminus, the 182-residue chain is Superoxide dismutase [Cu-Zn] (182 aa).

A signal peptide spans 1–19 (MFRTLTVVPLLALGLSLSA). The N-palmitoyl cysteine moiety is linked to residue C20. C20 is lipidated: S-diacylglycerol cysteine. Positions 69, 71, and 95 each coordinate Cu cation. C76 and C175 are disulfide-bonded. The disordered stretch occupies residues 91–118 (AAGGHFDPGASHNHDGPHARNDQGHGGD). Zn(2+)-binding residues include H95, H104, H115, and D118. Over residues 102 to 115 (HNHDGPHARNDQGH) the composition is skewed to basic and acidic residues.

The protein belongs to the Cu-Zn superoxide dismutase family. It depends on Cu cation as a cofactor. Requires Zn(2+) as cofactor.

It is found in the cell membrane. It catalyses the reaction 2 superoxide + 2 H(+) = H2O2 + O2. In terms of biological role, destroys radicals which are normally produced within the cells and which are toxic to biological systems. This Deinococcus radiodurans (strain ATCC 13939 / DSM 20539 / JCM 16871 / CCUG 27074 / LMG 4051 / NBRC 15346 / NCIMB 9279 / VKM B-1422 / R1) protein is Superoxide dismutase [Cu-Zn] (sodC).